The sequence spans 201 residues: tRNA (guanine-N(7)-)-methyltransferase (201 aa).

Residues Glu34, Glu59, Asp86, and Asp107 each contribute to the S-adenosyl-L-methionine site. The active site involves Asp107. Substrate contacts are provided by residues Lys111, Asp143, and Thr181–Glu184.

This sequence belongs to the class I-like SAM-binding methyltransferase superfamily. TrmB family.

It catalyses the reaction guanosine(46) in tRNA + S-adenosyl-L-methionine = N(7)-methylguanosine(46) in tRNA + S-adenosyl-L-homocysteine. It functions in the pathway tRNA modification; N(7)-methylguanine-tRNA biosynthesis. Catalyzes the formation of N(7)-methylguanine at position 46 (m7G46) in tRNA. This is tRNA (guanine-N(7)-)-methyltransferase from Mycoplasma mobile (strain ATCC 43663 / 163K / NCTC 11711) (Mesomycoplasma mobile).